The sequence spans 220 residues: uncharacterized protein (220 aa).

Transmembrane regions (helical) follow at residues 9 to 29, 54 to 74, 105 to 125, and 177 to 197; these read LWIT…GSTQ, YAVH…FLAV, VQGI…IHLW, and VLAV…VIEM.

It is found in the cell membrane. This is an uncharacterized protein from Sinorhizobium fredii (strain NBRC 101917 / NGR234).